The chain runs to 195 residues: Iron-sulfur flavoprotein AF_1519 (195 aa).

[4Fe-4S] cluster-binding residues include Cys45, Cys48, Cys51, and Cys57.

The protein belongs to the SsuE family. Isf subfamily. Homodimer. FMN serves as cofactor. Requires [4Fe-4S] cluster as cofactor.

In terms of biological role, redox-active protein probably involved in electron transport. In Archaeoglobus fulgidus (strain ATCC 49558 / DSM 4304 / JCM 9628 / NBRC 100126 / VC-16), this protein is Iron-sulfur flavoprotein AF_1519.